A 269-amino-acid polypeptide reads, in one-letter code: MLPYPQIDPVAVALGPLKIHWYGLMYLIGIGGAWLLASRRLNRFDPTWSREKLSDLVFWLSMGVIVGGRLGYVLFYDLHAYLANPTLIFEVWKGGMSFHGGFIGVMLAALWFGKRNNKSFFELMDFVAPLVPIGLGAGRIGNFINAELWGKATDVPWAMVFPPFSDPAQLPRHPSQLYQFALEGVALFVILWLYSRKPRPTMAVSGMFALFYGIFRFIVEFVRVPDAQLGYIAFGWLTMGQLLCVPMIVGGLFLIWLAYNRKPTAKPAV.

A run of 7 helical transmembrane segments spans residues 17-37 (LKIH…WLLA), 56-76 (LVFW…VLFY), 92-112 (WKGG…ALWF), 120-140 (FFEL…AGRI), 174-194 (PSQL…LWLY), 202-222 (MAVS…VEFV), and 237-257 (LTMG…LIWL). An a 1,2-diacyl-sn-glycero-3-phospho-(1'-sn-glycerol)-binding site is contributed by arginine 139.

The protein belongs to the Lgt family.

The protein localises to the cell inner membrane. It catalyses the reaction L-cysteinyl-[prolipoprotein] + a 1,2-diacyl-sn-glycero-3-phospho-(1'-sn-glycerol) = an S-1,2-diacyl-sn-glyceryl-L-cysteinyl-[prolipoprotein] + sn-glycerol 1-phosphate + H(+). It participates in protein modification; lipoprotein biosynthesis (diacylglyceryl transfer). Catalyzes the transfer of the diacylglyceryl group from phosphatidylglycerol to the sulfhydryl group of the N-terminal cysteine of a prolipoprotein, the first step in the formation of mature lipoproteins. The protein is Phosphatidylglycerol--prolipoprotein diacylglyceryl transferase of Pseudomonas putida (strain W619).